The chain runs to 1134 residues: Ovochymase-1 (1134 aa).

A signal peptide spans 1-22 (MGLLASAGLLLLLVIGHPRSLG). A propeptide spans 23 to 46 (LKCGIRMVNMKSKEPAVGSRFFSR) (activation peptide). Residues 38–296 (AVGSRFFSRI…LMDFITQNLF (259 aa)) enclose the Peptidase S1 1 domain. N-linked (GlcNAc...) asparagine glycosylation occurs at N52. The cysteines at positions 72 and 88 are disulfide-linked. H87 acts as the Charge relay system in catalysis. N99 carries N-linked (GlcNAc...) asparagine glycosylation. E116 lines the Ca(2+) pocket. Residue D139 is the Charge relay system of the active site. Intrachain disulfides connect C173/C243, C204/C222, and C233/C262. The active-site Charge relay system is S237. 2 consecutive CUB domains span residues 284–410 (VSEL…VTAV) and 419–531 (CGSL…FTIL). N324 carries N-linked (GlcNAc...) asparagine glycosylation. Intrachain disulfides connect C341–C373, C419–C446, and C473–C494. A glycan (N-linked (GlcNAc...) asparagine) is linked at N431. N507 carries N-linked (GlcNAc...) asparagine glycosylation. The region spanning 575-812 (IAGGEEACPH…FLDWIQSKIN (238 aa)) is the Peptidase S1 2 domain. An intrachain disulfide couples C600 to C616. Residues H615 and D664 each act as charge relay system in the active site. Disulfide bonds link C698-C769, C729-C747, C759-C788, and C846-C873. S763 functions as the Charge relay system in the catalytic mechanism. The 112-residue stretch at 846–957 (CSEAELEKPR…GAFGISYIVL (112 aa)) folds into the CUB 3 domain. The N-linked (GlcNAc...) asparagine glycan is linked to N1106.

This sequence belongs to the peptidase S1 family.

It is found in the secreted. This chain is Ovochymase-1 (OVCH1), found in Homo sapiens (Human).